The sequence spans 1311 residues: MDSMPRPERHAESLLDICHEAGSTPMEMTVSQTENLTLQSISSSEDFDLEDDFSPFILAREGAAPRGENWPRRTEGVEIIVTFPPDPLQEASQEDLKESNQVTSEHQEREQVHPVSPPDDAEMVGLTGRMLTTQPSLLKTDGSSEELCGVDVALSPPRPCLDSSLAASAAGEVAPCVLKEQQRQSDEFPTSDISYSSRRTGLPLPPLSCLPMRSCIFNMEKSPKSPRHRERKVPSLSLSVPKLLEPLSRPLSQSAEFSSSKNHQEVTQEGPVEHTLRGSNCTLWSRNMCSFRKSGKQGVAESWPSQEMEGWDKTKTSGFKEGPSLFSCESVKEDTTPTERERDSGYHVSEMQRGGEDSQYLSSRKKESWTARVVERDSGVEHPILCKLLEVSNSEMTPAEEKEIGNENVPDAKSNSVHKSGAMEPHAASEEVSVPKNGPSVNSDGPAEELEGHRDIEQNRKIPMEEETNPEMNGVVPLTHIAFPGEGTSKGPARAEPHLQRRKRPAQNSNSFNLLAHREHDKLQTNTHRTKLDSRTKARNRAPPNLMVSIQASIKPNMHKNSIKTQVFPALELIDHRPHPSSKFQRRAPLTEKKSTHQTQKPKKQAFPRIGKHAGIKKPGIPLSAETTDPRLHFLDLKYSDMFKEINSASNGPGIYEMFGTPVYCHIREAERHDHRCYREIRTAPSGRCVVNKCQSSESDRCSNSRARLLQKRQHIKPPKPLHGLRQKHRGFISKDKGCKDMGGHTEDSVSEPDGQMKSPGNDFLSSKDDAQLMHLIPIPELSPEQKAPAPVSDLSIVEEIFTEECADEEGILNDDSLTQSLGDLKEPEGLHPQAPLVPSENSWAVLSEKRSGKRVSPEKHNVEPLDKINAEQMFPGYLEFDSLSEKSKTLVSFSSCSFQENLERAPSPTEQHWARSLEQDSLENNSTTYQTFGKISQEILDPGKNEELTDELLGCLVEELLALDEKDNNSCQIMTNEADAKNLNLVFSRRGNTIEELGRETTDVKLQRCINGFRIYDEENFLTSNEKKTLSDKSLNHEEAIFWTKGEILGRGAYGTVYCGLTSLGQLIAVKQVALDTSDKLATEKEYRKLQEEVDLLKALKHVNIVAYLGTCLEENTLSIFMEFVPGGSISSIINRFGPLPEMVFCKYTRQILQGVAYLHDNCVVHRDIKGNNVMLMPTGIIKLIDFGCAKRLAWAGLNGTHSDMLKSMRGTPYWMAPEVINESGYGRKSDIWSIGCTVFEMATGKPPLASMDRMAAMFYIGAHRGLMPPLPARFSEPAADFVRLCLTRDQHERPSALQLLKHSFLKRSQ.

Disordered stretches follow at residues 85–119 (PDPLQEASQEDLKESNQVTSEHQEREQVHPVSPPD), 250–274 (PLSQSAEFSSSKNHQEVTQEGPVEH), 330–363 (SVKEDTTPTERERDSGYHVSEMQRGGEDSQYLSS), 396–472 (MTPA…NPEM), 486–508 (EGTSKGPARAEPHLQRRKRPAQN), 576–607 (HRPHPSSKFQRRAPLTEKKSTHQTQKPKKQAF), and 734–767 (SKDKGCKDMGGHTEDSVSEPDGQMKSPGNDFLSS). Residues 250-261 (PLSQSAEFSSSK) show a composition bias toward polar residues. Basic and acidic residues-rich tracts occupy residues 262 to 274 (NHQEVTQEGPVEH), 330 to 345 (SVKEDTTPTERERDSG), and 450 to 464 (LEGHRDIEQNRKIPM). Basic and acidic residues predominate over residues 734 to 748 (SKDKGCKDMGGHTED). Residues 1044-1307 (WTKGEILGRG…ALQLLKHSFL (264 aa)) enclose the Protein kinase domain. ATP-binding positions include 1050-1058 (LGRGAYGTV) and lysine 1072. The active-site Proton acceptor is aspartate 1169.

Belongs to the protein kinase superfamily. STE Ser/Thr protein kinase family. STE20 subfamily.

It carries out the reaction L-seryl-[protein] + ATP = O-phospho-L-seryl-[protein] + ADP + H(+). The catalysed reaction is L-threonyl-[protein] + ATP = O-phospho-L-threonyl-[protein] + ADP + H(+). The protein is Mitogen-activated protein kinase kinase kinase 19 (Map3k19) of Mus musculus (Mouse).